Here is a 233-residue protein sequence, read N- to C-terminus: Ribonuclease 3 (233 aa).

The 123-residue stretch at 5-127 (LERLCRKLGY…VIGAVYLDGG (123 aa)) folds into the RNase III domain. Mg(2+) is bound at residue E40. The active site involves D44. Residues D113 and E116 each contribute to the Mg(2+) site. Residue E116 is part of the active site. The DRBM domain occupies 156–226 (DPKTRLQEYL…ATRALALLLA (71 aa)).

The protein belongs to the ribonuclease III family. In terms of assembly, homodimer. Mg(2+) is required as a cofactor.

It is found in the cytoplasm. The enzyme catalyses Endonucleolytic cleavage to 5'-phosphomonoester.. Digests double-stranded RNA. Involved in the processing of primary rRNA transcript to yield the immediate precursors to the large and small rRNAs (23S and 16S). Processes some mRNAs, and tRNAs when they are encoded in the rRNA operon. Processes pre-crRNA and tracrRNA of type II CRISPR loci if present in the organism. In Nitrosococcus oceani (strain ATCC 19707 / BCRC 17464 / JCM 30415 / NCIMB 11848 / C-107), this protein is Ribonuclease 3.